A 170-amino-acid polypeptide reads, in one-letter code: ATP synthase subunit b (170 aa).

Residues 15 to 37 form a helical membrane-spanning segment; the sequence is FNLFETNILNWAVVVFGLYKFLP.

This sequence belongs to the ATPase B chain family. As to quaternary structure, F-type ATPases have 2 components, F(1) - the catalytic core - and F(0) - the membrane proton channel. F(1) has five subunits: alpha(3), beta(3), gamma(1), delta(1), epsilon(1). F(0) has four main subunits: a(1), b(1), b'(1) and c(10-14). The alpha and beta chains form an alternating ring which encloses part of the gamma chain. F(1) is attached to F(0) by a central stalk formed by the gamma and epsilon chains, while a peripheral stalk is formed by the delta, b and b' chains.

The protein resides in the cellular thylakoid membrane. Its function is as follows. F(1)F(0) ATP synthase produces ATP from ADP in the presence of a proton or sodium gradient. F-type ATPases consist of two structural domains, F(1) containing the extramembraneous catalytic core and F(0) containing the membrane proton channel, linked together by a central stalk and a peripheral stalk. During catalysis, ATP synthesis in the catalytic domain of F(1) is coupled via a rotary mechanism of the central stalk subunits to proton translocation. In terms of biological role, component of the F(0) channel, it forms part of the peripheral stalk, linking F(1) to F(0). The protein is ATP synthase subunit b of Prochlorococcus marinus (strain MIT 9312).